The chain runs to 69 residues: MLLYIVIIVACIISKLVPNEYWAIHLFFIIMIFMVYMYEKLDIHQKYQFWNYTMSGLSGHNVQITCKCY.

The Cytoplasmic portion of the chain corresponds to 1–15 (MLLYIVIIVACIISK). The helical transmembrane segment at 16–36 (LVPNEYWAIHLFFIIMIFMVY) threads the bilayer. The Extracellular segment spans residues 37 to 69 (MYEKLDIHQKYQFWNYTMSGLSGHNVQITCKCY). N51 carries an N-linked (GlcNAc...) asparagine; by host glycan.

This sequence belongs to the asfivirus X69R family.

It is found in the host membrane. This is an uncharacterized protein from Ornithodoros (relapsing fever ticks).